The following is a 481-amino-acid chain: UDP-N-acetylmuramate--L-alanine ligase (481 aa).

Residue G126–T132 participates in ATP binding.

This sequence belongs to the MurCDEF family.

It localises to the cytoplasm. The catalysed reaction is UDP-N-acetyl-alpha-D-muramate + L-alanine + ATP = UDP-N-acetyl-alpha-D-muramoyl-L-alanine + ADP + phosphate + H(+). It participates in cell wall biogenesis; peptidoglycan biosynthesis. In terms of biological role, cell wall formation. The protein is UDP-N-acetylmuramate--L-alanine ligase of Marinobacter nauticus (strain ATCC 700491 / DSM 11845 / VT8) (Marinobacter aquaeolei).